The primary structure comprises 773 residues: Leucine-rich repeat-containing protein let-4 (773 aa).

The N-terminal stretch at 1 to 20 (MRLLLCLLLFSTLLINSTNA) is a signal peptide. At 21-689 (CPGVITQACF…RLEKSFFTTT (669 aa)) the chain is on the extracellular side. 16 LRR repeats span residues 61–84 (VGLI…FFSG), 85–107 (LFIR…AFAG), 109–132 (NPVL…ALAG), 133–157 (LPNL…IFPN), 159–181 (NKLY…TFQN), 183–206 (KNSI…AIRG), 207–230 (LKQL…NFLN), 231–254 (LPVL…AFLN), 256–278 (PSLR…QFQT), 279–302 (FEQL…SLSG), 303–326 (LKQL…AFTN), 328–349 (SIVV…IISG), 350–373 (LPNL…AFYD), 375–397 (ASLV…TFLA), 399–421 (LNLL…AFNS), and 486–516 (LVQI…AFQQ). A helical membrane pass occupies residues 690-710 (IIFICVGTAVIVLVVVIAGLC). At 711–773 (ISKHRQLQFE…PGSSYCNYYK (63 aa)) the chain is on the cytoplasmic side.

In L1 larvae, expressed in a subset of epithelial cells including epidermal, vulval and rectal cells and the excretory duct and pore. Absent from internal epithelia such as the gut and pharyngeal tubes. Transiently expressed in the excretory canal cell at the 1.5-fold embryonic stage but no longer visible in this cell at hatching.

The protein localises to the apical cell membrane. Its function is as follows. Required for apical extracellular matrix organization and epithelial junction maintenance. In Caenorhabditis elegans, this protein is Leucine-rich repeat-containing protein let-4 (let-4).